We begin with the raw amino-acid sequence, 441 residues long: Ribosomal protein uS12 methylthiotransferase RimO (441 aa).

In terms of domain architecture, MTTase N-terminal spans 6–116; the sequence is QKVGIVSLGC…VVAAVHEAAP (111 aa). [4Fe-4S] cluster contacts are provided by cysteine 15, cysteine 51, cysteine 80, cysteine 147, cysteine 151, and cysteine 154. Positions 133–370 constitute a Radical SAM core domain; sequence LTPRHYAYLK…MAAQQEISER (238 aa). Residues 373–439 enclose the TRAM domain; sequence AQKVGTVIEA…EYDLWGSLAG (67 aa).

This sequence belongs to the methylthiotransferase family. RimO subfamily. [4Fe-4S] cluster is required as a cofactor.

It is found in the cytoplasm. The catalysed reaction is L-aspartate(89)-[ribosomal protein uS12]-hydrogen + (sulfur carrier)-SH + AH2 + 2 S-adenosyl-L-methionine = 3-methylsulfanyl-L-aspartate(89)-[ribosomal protein uS12]-hydrogen + (sulfur carrier)-H + 5'-deoxyadenosine + L-methionine + A + S-adenosyl-L-homocysteine + 2 H(+). Functionally, catalyzes the methylthiolation of an aspartic acid residue of ribosomal protein uS12. The sequence is that of Ribosomal protein uS12 methylthiotransferase RimO from Rhodospirillum rubrum (strain ATCC 11170 / ATH 1.1.1 / DSM 467 / LMG 4362 / NCIMB 8255 / S1).